Reading from the N-terminus, the 147-residue chain is Hemoglobin subunit beta-A/B (147 aa).

The Globin domain maps to 2-147 (EWTDAERSAI…VVNALKRQYH (146 aa)). 2 residues coordinate heme b: histidine 63 and histidine 92.

It belongs to the globin family. In terms of assembly, heterotetramer of two alpha chains and two beta chains. In terms of tissue distribution, red blood cells.

Involved in oxygen transport from gills to the various peripheral tissues. The protein is Hemoglobin subunit beta-A/B of Cyprinus carpio (Common carp).